Here is a 226-residue protein sequence, read N- to C-terminus: Putative O-methyltransferase Mvan_4497 (226 aa).

Residues V53, E75, 77–78, S83, D101, and V102 contribute to the S-adenosyl-L-methionine site; that span reads GT. D149 lines the substrate pocket.

This sequence belongs to the class I-like SAM-binding methyltransferase superfamily. Cation-dependent O-methyltransferase family.

The polypeptide is Putative O-methyltransferase Mvan_4497 (Mycolicibacterium vanbaalenii (strain DSM 7251 / JCM 13017 / BCRC 16820 / KCTC 9966 / NRRL B-24157 / PYR-1) (Mycobacterium vanbaalenii)).